The sequence spans 324 residues: O-ureido-L-serine synthase (324 aa).

Lys43 carries the N6-(pyridoxal phosphate)lysine modification. Pyridoxal 5'-phosphate-binding positions include Asn73, Gly177–Thr181, and Ser265.

It belongs to the cysteine synthase/cystathionine beta-synthase family. Homotetramer. The cofactor is pyridoxal 5'-phosphate.

The enzyme catalyses hydroxyurea + O-acetyl-L-serine = O-ureido-L-serine + acetate + H(+). The catalysed reaction is O-acetyl-L-serine + hydrogen sulfide = L-cysteine + acetate. Functionally, involved in the biosynthesis of the antibiotic D-cycloserine (DCS), a cyclic structural analog of D-alanine, used as an antitubercular agent. Catalyzes the addition of hydroxyurea on O-acetyl-L-serine (OAS) to yield O-ureido-L-serine. It prefers sulfide as the second substrate, followed by hydroxyurea, L-homocysteine, and thiosulfate. This is O-ureido-L-serine synthase from Streptomyces lavendulae.